The following is a 180-amino-acid chain: 3-hydroxyanthranilate 3,4-dioxygenase (180 aa).

Arginine 46 is a binding site for O2. Residues histidine 50, glutamate 56, and histidine 94 each coordinate Fe cation. Glutamate 56 contacts substrate. Residues arginine 98 and glutamate 109 each coordinate substrate. The Fe cation site is built by cysteine 124, cysteine 127, cysteine 161, and cysteine 164.

The protein belongs to the 3-HAO family. Homodimer. Fe(2+) is required as a cofactor.

It catalyses the reaction 3-hydroxyanthranilate + O2 = (2Z,4Z)-2-amino-3-carboxymuconate 6-semialdehyde. The protein operates within cofactor biosynthesis; NAD(+) biosynthesis; quinolinate from L-kynurenine: step 3/3. Functionally, catalyzes the oxidative ring opening of 3-hydroxyanthranilate to 2-amino-3-carboxymuconate semialdehyde, which spontaneously cyclizes to quinolinate. The protein is 3-hydroxyanthranilate 3,4-dioxygenase of Ruegeria pomeroyi (strain ATCC 700808 / DSM 15171 / DSS-3) (Silicibacter pomeroyi).